Here is a 938-residue protein sequence, read N- to C-terminus: MSDYKSTLNLPETGFPMRGDLAKREPGMLARWTDDDLYGIIRAAKKGKKTFILHDGPPYANGSIHIGHSVNKILKDIIVKSKGLAGYDSPYVPGWDCHGLPIELKVEQEFGKPGEKFTAAEFRAKCREYAATQVDGQRKDFIRLGVLGDWSHPYLTMDFNTEANIIRALGKIIGNGHLHKGAKPVHWCVDCRSALAEAEVEYYDKTSPSIDVAFNAVDAAAVAAKFGAQNVNGPVSLVIWTTTPWTLPANRAISLHAEIDYVLVQIEGQALIVAKDLLESVMKRINVADYTVLGETKGAQLELMRFTHPFMGFDVPAILGEHVTLDAGTGAVHTAGGHGPDDYTISQKYGLEIANPVGPDGTYLPGTYPGLDGVNVFKANDQIVELLREKGALLNVAKLLHSYPCCWRHKTPIIFRATPQWFVSMDQKGLRAQSLKEIKGVQWIPDWGQARIESMVANRPDWCISRQRTWGVPMSLFVHKETQELHPRTLELMEEVAKRVEQDGIQAWWDLDPRDIMGDDADVYEKVPDTLDVWFDSGSTHSSVVDVRPEFAGHAADMYLEGSDQHRGWFMSSLMISTAMKGKAPYRQVLTHGFTVDGQGRKMSKSIGNTVSPQDVMNKLGADILRLWVASTDYTGEMAVSDEILKRAADAYRRIRNTARFLLANLNGFDPAKDMVKPEEMVVLDRWAVGCAKAAQDDIVKAYEAYDFHEVVQRLMRFCSIEMGSFYLDIIKDRQYTAKADSVARRSCQTALYHISEALVRWIAPILSFTADEVWGYLPGEREKYVFTGEWYDGLFGLADTEAMNDAYWDALLKVRGEVNKVIEQARADKKVGGSLEAAVTLYAEPELAAKLTALGEELRFVLLTSQAKVEDYASAAADAQQSELLKGLKVALAKAEGEKCPRCWHYTTDIGKVAEHAEICGRCVSNVAGDGEKRKFA.

Positions 58–68 (PYANGSIHIGH) match the 'HIGH' region motif. L-isoleucyl-5'-AMP is bound at residue Glu561. Positions 602 to 606 (KMSKS) match the 'KMSKS' region motif. An ATP-binding site is contributed by Lys605. Cys901, Cys904, Cys921, and Cys924 together coordinate Zn(2+).

This sequence belongs to the class-I aminoacyl-tRNA synthetase family. IleS type 1 subfamily. As to quaternary structure, monomer. Zn(2+) is required as a cofactor.

Its subcellular location is the cytoplasm. The enzyme catalyses tRNA(Ile) + L-isoleucine + ATP = L-isoleucyl-tRNA(Ile) + AMP + diphosphate. Its function is as follows. Catalyzes the attachment of isoleucine to tRNA(Ile). As IleRS can inadvertently accommodate and process structurally similar amino acids such as valine, to avoid such errors it has two additional distinct tRNA(Ile)-dependent editing activities. One activity is designated as 'pretransfer' editing and involves the hydrolysis of activated Val-AMP. The other activity is designated 'posttransfer' editing and involves deacylation of mischarged Val-tRNA(Ile). The polypeptide is Isoleucine--tRNA ligase (Cronobacter sakazakii (strain ATCC BAA-894) (Enterobacter sakazakii)).